Consider the following 2645-residue polypeptide: Non-reducing polyketide synthase AC (2645 aa).

The interval 73-2366 is N-terminal acylcarrier protein transacylase domain (SAT); it reads ALQNLNEWLK…TDIVHNAWPM (2294 aa). Residue H260 is the Proton donor/acceptor; for transacylase activity of the active site. The 419-residue stretch at 416–834 folds into the Ketosynthase family 3 (KS3) domain; it reads DDKIAVIGMA…GSNSSLVVTE (419 aa). Active-site for beta-ketoacyl synthase activity residues include C583, H718, and H757. The malonyl-CoA:ACP transacylase (MAT) domain stretch occupies residues 943–1252; that stretch reads CFGGQISTYI…HAVSITTDKS (310 aa). An N-terminal hotdog fold region spans residues 1324–1457; the sequence is SKGFTSFAGY…GVCSFCSATD (134 aa). The PKS/mFAS DH domain maps to 1324-1637; the sequence is SKGFTSFAGY…YNKVPLPVMR (314 aa). The segment at 1330-1641 is product template (PT) domain; it reads FAGYIDGNQR…PLPVMRGILG (312 aa). The active-site Proton acceptor; for dehydratase activity is the H1359. Residues 1487–1637 are C-terminal hotdog fold; the sequence is NIMQGTANIY…YNKVPLPVMR (151 aa). D1542 acts as the Proton donor; for dehydratase activity in catalysis. A compositionally biased stretch (polar residues) spans 1684–1696; the sequence is NGTTGTENPQIKS. The interval 1684-1716 is disordered; that stretch reads NGTTGTENPQIKSKTNKVKKVPTRKSGGSDLET. Over residues 1697–1706 the composition is skewed to basic residues; the sequence is KTNKVKKVPT. Residues 1711–1788 form the Carrier domain; that stretch reads GSDLETPAKT…SLVKYIREIR (78 aa). S1748 is subject to O-(pantetheine 4'-phosphoryl)serine. Residues 1794–1805 are compositionally biased toward acidic residues; that stretch reads QNVDDSESESEE. Positions 1794 to 1816 are disordered; the sequence is QNVDDSESESEELQQQATPIDSA. The active-site For methyltransferase activity is the Y2009. The tract at residues 2023 to 2197 is methyltransferase (CMeT) domain; it reads EVFVEKIGSS…SVGYGHVDWT (175 aa). Positions 2269–2573 are NADPH-binding (R) domain; sequence CVLITGATGS…NIIPFYDWVQ (305 aa).

It functions in the pathway mycotoxin biosynthesis. Its function is as follows. Non-reducing polyketide synthase; part of the gene cluster that mediates the biosynthesis of the selective antifungal agent ascochitine, an o-quinone methide that plays a possible protective role against other microbial competitors in nature and is considered to be important for pathogenicity of legume-associated Didymella species. The pathway probably begins with the synthesis of a keto-aldehyde intermediate by the ascochitine non-reducing polyketide synthase pksAC from successive condensations of 4 malonyl-CoA units, presumably with a simple acetyl-CoA starter unit. Release of the keto-aldehyde intermediate is consistent with the presence of the C-terminal reductive release domain. The HR-PKS (orf7) probably makes a diketide starter unit which is passed to the non-reducing polyketide synthase pksAC for further extension, producing ascochital and ascochitine. The aldehyde dehydrogenase (orf1), the 2-oxoglutarate-dependent dioxygenase (orf3) and the dehydrogenase (orf9) are probably involved in subsequent oxidations of methyl groups to the carboxylic acid of the heterocyclic ring. The ascochitine gene cluster also includes a gene encoding a short peptide (orf2) that is often found in secondary metabolite gene clusters and which function has still to be determined. The sequence is that of Non-reducing polyketide synthase AC from Didymella fabae (Leaf and pod spot disease fungus).